The chain runs to 603 residues: Aspartate--tRNA(Asp/Asn) ligase (603 aa).

The tract at residues Gln-205–Lys-208 is aspartate. Arg-227 lines the L-aspartate pocket. ATP is bound by residues Arg-227–Glu-229 and Gln-236. His-463 contributes to the L-aspartate binding site. Glu-497 is an ATP binding site. Arg-504 contacts L-aspartate. Gly-549–Arg-552 contributes to the ATP binding site.

The protein belongs to the class-II aminoacyl-tRNA synthetase family. Type 1 subfamily. In terms of assembly, homodimer.

It localises to the cytoplasm. The catalysed reaction is tRNA(Asx) + L-aspartate + ATP = L-aspartyl-tRNA(Asx) + AMP + diphosphate. In terms of biological role, aspartyl-tRNA synthetase with relaxed tRNA specificity since it is able to aspartylate not only its cognate tRNA(Asp) but also tRNA(Asn). Reaction proceeds in two steps: L-aspartate is first activated by ATP to form Asp-AMP and then transferred to the acceptor end of tRNA(Asp/Asn). In Anaeromyxobacter sp. (strain K), this protein is Aspartate--tRNA(Asp/Asn) ligase.